The chain runs to 298 residues: Phosphatidylglycerol--prolipoprotein diacylglyceryl transferase (298 aa).

The next 3 membrane-spanning stretches (helical) occupy residues 17 to 37 (LAVR…IVVG), 59 to 79 (MMFY…VLFY), and 97 to 117 (GGMS…LFAW). Arg-142 contacts a 1,2-diacyl-sn-glycero-3-phospho-(1'-sn-glycerol). 2 consecutive transmembrane segments (helical) span residues 230 to 250 (MGAI…TVEF) and 257 to 277 (FLGL…PMIV).

It belongs to the Lgt family.

The protein resides in the cell inner membrane. It carries out the reaction L-cysteinyl-[prolipoprotein] + a 1,2-diacyl-sn-glycero-3-phospho-(1'-sn-glycerol) = an S-1,2-diacyl-sn-glyceryl-L-cysteinyl-[prolipoprotein] + sn-glycerol 1-phosphate + H(+). The protein operates within protein modification; lipoprotein biosynthesis (diacylglyceryl transfer). Its function is as follows. Catalyzes the transfer of the diacylglyceryl group from phosphatidylglycerol to the sulfhydryl group of the N-terminal cysteine of a prolipoprotein, the first step in the formation of mature lipoproteins. The sequence is that of Phosphatidylglycerol--prolipoprotein diacylglyceryl transferase from Burkholderia cenocepacia (strain ATCC BAA-245 / DSM 16553 / LMG 16656 / NCTC 13227 / J2315 / CF5610) (Burkholderia cepacia (strain J2315)).